The following is a 183-amino-acid chain: ATP synthase subunit b, chloroplastic (183 aa).

A helical membrane pass occupies residues 25–45 (DILATNLINLTVVVGVLIFFG).

The protein belongs to the ATPase B chain family. F-type ATPases have 2 components, F(1) - the catalytic core - and F(0) - the membrane proton channel. F(1) has five subunits: alpha(3), beta(3), gamma(1), delta(1), epsilon(1). F(0) has four main subunits: a(1), b(1), b'(1) and c(10-14). The alpha and beta chains form an alternating ring which encloses part of the gamma chain. F(1) is attached to F(0) by a central stalk formed by the gamma and epsilon chains, while a peripheral stalk is formed by the delta, b and b' chains.

The protein localises to the plastid. Its subcellular location is the chloroplast thylakoid membrane. In terms of biological role, f(1)F(0) ATP synthase produces ATP from ADP in the presence of a proton or sodium gradient. F-type ATPases consist of two structural domains, F(1) containing the extramembraneous catalytic core and F(0) containing the membrane proton channel, linked together by a central stalk and a peripheral stalk. During catalysis, ATP synthesis in the catalytic domain of F(1) is coupled via a rotary mechanism of the central stalk subunits to proton translocation. Its function is as follows. Component of the F(0) channel, it forms part of the peripheral stalk, linking F(1) to F(0). This Saccharum hybrid (Sugarcane) protein is ATP synthase subunit b, chloroplastic.